The sequence spans 157 residues: 2-C-methyl-D-erythritol 2,4-cyclodiphosphate synthase (157 aa).

A divalent metal cation contacts are provided by Asp8 and His10. 4-CDP-2-C-methyl-D-erythritol 2-phosphate-binding positions include 8–10 and 34–35; these read DVH and HS. Residue His42 coordinates a divalent metal cation. Residues 56-58, 132-135, and Arg142 each bind 4-CDP-2-C-methyl-D-erythritol 2-phosphate; these read DIG and TTNE.

The protein belongs to the IspF family. As to quaternary structure, homotrimer. A divalent metal cation serves as cofactor.

It catalyses the reaction 4-CDP-2-C-methyl-D-erythritol 2-phosphate = 2-C-methyl-D-erythritol 2,4-cyclic diphosphate + CMP. The protein operates within isoprenoid biosynthesis; isopentenyl diphosphate biosynthesis via DXP pathway; isopentenyl diphosphate from 1-deoxy-D-xylulose 5-phosphate: step 4/6. Functionally, involved in the biosynthesis of isopentenyl diphosphate (IPP) and dimethylallyl diphosphate (DMAPP), two major building blocks of isoprenoid compounds. Catalyzes the conversion of 4-diphosphocytidyl-2-C-methyl-D-erythritol 2-phosphate (CDP-ME2P) to 2-C-methyl-D-erythritol 2,4-cyclodiphosphate (ME-CPP) with a corresponding release of cytidine 5-monophosphate (CMP). The polypeptide is 2-C-methyl-D-erythritol 2,4-cyclodiphosphate synthase (Chlorobaculum tepidum (strain ATCC 49652 / DSM 12025 / NBRC 103806 / TLS) (Chlorobium tepidum)).